A 167-amino-acid polypeptide reads, in one-letter code: Zinc finger CCCH domain-containing protein 3 (167 aa).

The C3H1-type zinc-finger motif lies at 63–91 (AAAIGVCQHFVRTGTCKFGDSCRYFHPKP). Positions 89–101 (PKPPPANPGPAPS) are enriched in pro residues. The segment at 89 to 167 (PKPPPANPGP…YPPFPFVDWG (79 aa)) is disordered. A compositionally biased stretch (polar residues) spans 108–120 (MAQQSNIQGSQPN). Over residues 149–167 (SLRPPPEGGYPPFPFVDWG) the composition is skewed to pro residues.

The sequence is that of Zinc finger CCCH domain-containing protein 3 from Oryza sativa subsp. japonica (Rice).